A 129-amino-acid chain; its full sequence is Glycine cleavage system H protein (129 aa).

The region spanning 24-106 is the Lipoyl-binding domain; the sequence is SYTVGITEHA…YGEGWFFRVM (83 aa). N6-lipoyllysine is present on K65.

It belongs to the GcvH family. The glycine cleavage system is composed of four proteins: P, T, L and H. The cofactor is (R)-lipoate.

In terms of biological role, the glycine cleavage system catalyzes the degradation of glycine. The H protein shuttles the methylamine group of glycine from the P protein to the T protein. This is Glycine cleavage system H protein from Shewanella putrefaciens (strain CN-32 / ATCC BAA-453).